Consider the following 275-residue polypeptide: MTDDKDVLRDVWFGRIPTCFTLYQDEITEREAEPYYLLLPRVSYLTLVTDKVKKHFQKVMRQEDVSEIWFEYEGTPLKWHYPIGLLFDLLASSSALPWNITVHFKSFPEKDLLHCPSKDAVEAHFMSCMKEADALKHKSQVINEMQKKDHKQLWMGLQNDRFDQFWAINRKLMEYPPEENGFRYIPFRIYQTTTERPFIQKLFRPVAADGQLHTLGDLLREVCPSAVAPEDGEKRSQVMIHGIEPMLETPLQWLSEHLSYPDNFLHISIVPQPTD.

Met1 is modified (N-acetylmethionine). Residue Lys130 forms a Glycyl lysine isopeptide (Lys-Gly) (interchain with G-Cter in ATG12) linkage.

It belongs to the ATG5 family. As to quaternary structure, forms a conjugate with ATG12. Part of the minor complex composed of 4 sets of ATG12-ATG5 and ATG16L1 (400 kDa); this complex interacts with ATG3 leading to disruption of ATG7 interaction and promotion of ATG8-like proteins lipidation. Forms an 800-kDa complex composed of ATG12-ATG5 and ATG16L2. The ATG12-ATG5 conjugate interacts with RAB33A; this interaction is bridged by ATG16L1 and promotes ATG12-ATG5-ATG16L1 complex recruitment to phagophores. Interacts with TECPR1; the interaction is direct and does not take place when ATG16L1 is associated with the ATG5-ATG12 conjugate. Interacts with DHX58/RIG-1, IFIH1/MDA5 and MAVS/IPS-1 in monomeric form as well as in ATG12-ATG5 conjugate form. The interaction with MAVS is further enhanced upon vesicular stomatitis virus (VSV) infection. Interacts with ATG3. Interacts with ATG7 and ATG10. Interacts with FADD. Interacts with Bassoon/BSN; this interaction is important for the regulation of presynaptic autophagy. Interacts with ATG16L2. Post-translationally, conjugated to ATG12; which is essential for autophagy, but is not required for association with isolation membrane. Acetylated by EP300. In terms of tissue distribution, ubiquitous.

The protein resides in the cytoplasm. The protein localises to the preautophagosomal structure membrane. In terms of biological role, involved in autophagic vesicle formation. Conjugation with ATG12, through a ubiquitin-like conjugating system involving ATG7 as an E1-like activating enzyme and ATG10 as an E2-like conjugating enzyme, is essential for its function. The ATG12-ATG5 conjugate acts as an E3-like enzyme which is required for lipidation of ATG8 family proteins and their association to the vesicle membranes. Involved in mitochondrial quality control after oxidative damage, and in subsequent cellular longevity. Plays a critical role in multiple aspects of lymphocyte development and is essential for both B and T lymphocyte survival and proliferation. Required for optimal processing and presentation of antigens for MHC II. Involved in the maintenance of axon morphology and membrane structures, as well as in normal adipocyte differentiation. Promotes primary ciliogenesis through removal of OFD1 from centriolar satellites and degradation of IFT20 via the autophagic pathway. As part of the ATG8 conjugation system with ATG12 and ATG16L1, required for recruitment of LRRK2 to stressed lysosomes and induction of LRRK2 kinase activity in response to lysosomal stress. Functionally, may play an important role in the apoptotic process, possibly within the modified cytoskeleton. Its expression is a relatively late event in the apoptotic process, occurring downstream of caspase activity. Plays a crucial role in IFN-gamma-induced autophagic cell death by interacting with FADD. (Microbial infection) May act as a proviral factor. In association with ATG12, negatively regulates the innate antiviral immune response by impairing the type I IFN production pathway upon vesicular stomatitis virus (VSV) infection. The chain is Autophagy protein 5 from Mus musculus (Mouse).